The sequence spans 132 residues: Phosphoribosyl-AMP cyclohydrolase (132 aa).

Asp79 lines the Mg(2+) pocket. Cys80 is a Zn(2+) binding site. Positions 81 and 83 each coordinate Mg(2+). Zn(2+) contacts are provided by Cys100 and Cys107.

This sequence belongs to the PRA-CH family. As to quaternary structure, homodimer. Mg(2+) is required as a cofactor. It depends on Zn(2+) as a cofactor.

It localises to the cytoplasm. It catalyses the reaction 1-(5-phospho-beta-D-ribosyl)-5'-AMP + H2O = 1-(5-phospho-beta-D-ribosyl)-5-[(5-phospho-beta-D-ribosylamino)methylideneamino]imidazole-4-carboxamide. The protein operates within amino-acid biosynthesis; L-histidine biosynthesis; L-histidine from 5-phospho-alpha-D-ribose 1-diphosphate: step 3/9. Functionally, catalyzes the hydrolysis of the adenine ring of phosphoribosyl-AMP. The protein is Phosphoribosyl-AMP cyclohydrolase of Delftia acidovorans (strain DSM 14801 / SPH-1).